The sequence spans 360 residues: Nicotinate-nucleotide--dimethylbenzimidazole phosphoribosyltransferase (360 aa).

E327 acts as the Proton acceptor in catalysis.

It belongs to the CobT family.

It carries out the reaction 5,6-dimethylbenzimidazole + nicotinate beta-D-ribonucleotide = alpha-ribazole 5'-phosphate + nicotinate + H(+). The protein operates within nucleoside biosynthesis; alpha-ribazole biosynthesis; alpha-ribazole from 5,6-dimethylbenzimidazole: step 1/2. Catalyzes the synthesis of alpha-ribazole-5'-phosphate from nicotinate mononucleotide (NAMN) and 5,6-dimethylbenzimidazole (DMB). This is Nicotinate-nucleotide--dimethylbenzimidazole phosphoribosyltransferase from Shewanella baltica (strain OS223).